Consider the following 399-residue polypeptide: Insertion element IS116 uncharacterized 44.8 kDa protein (399 aa).

Belongs to the transposase IS1111A/IS1328/IS1533 family.

In Streptomyces clavuligerus, this protein is Insertion element IS116 uncharacterized 44.8 kDa protein.